The primary structure comprises 373 residues: Probable di-N-acetylchitobiase 1 (373 aa).

The first 20 residues, 1–20, serve as a signal peptide directing secretion; the sequence is MKIFIIISLILTILIIQSKS. A GH18 domain is found at 21 to 369; it reads KECPCSNVEL…SGMWGALNSF (349 aa). N-linked (GlcNAc...) asparagine glycosylation occurs at Asn48. Chitin-binding positions include 53 to 54 and 82 to 85; these read PY and NGVR. Asn99 carries N-linked (GlcNAc...) asparagine glycosylation. Glu127 serves as the catalytic Proton donor. Chitin contacts are provided by residues Tyr128 and 191–194; that span reads MDYD. Residues Asn222, Asn250, Asn269, Asn279, and Asn288 are each glycosylated (N-linked (GlcNAc...) asparagine). Trp347 lines the chitin pocket.

This sequence belongs to the glycosyl hydrolase 18 family.

It is found in the lysosome. Involved in the degradation of asparagine-linked glycoproteins. May hydrolyze of N-acetyl-beta-D-glucosamine (1-4)N-acetylglucosamine chitobiose core from the reducing end of the bond. This is Probable di-N-acetylchitobiase 1 (ctbs1) from Dictyostelium discoideum (Social amoeba).